Consider the following 949-residue polypeptide: ATPase 5, plasma membrane-type (949 aa).

Position 2 is an N-acetylserine (Ser-2). The Cytoplasmic segment spans residues 2-61 (SELDHIKNESVDLVRIPMEEVFEELKCTKQGLTANEASHRLDVFGPNKLEEKKESKLLKF). Residues 62-81 (LGFMWNPLSWVMEVAALMAI) traverse the membrane as a helical segment. The Extracellular portion of the chain corresponds to 82 to 93 (ALANGGGRPPDW). A helical transmembrane segment spans residues 94–114 (QDFVGIVCLLLINSTISFIEE). Residues 115–243 (NNAGNAAAAL…GHFQKVLTSI (129 aa)) lie on the Cytoplasmic side of the membrane. A helical transmembrane segment spans residues 244–264 (GNFCICSIALGIIVELLVMYP). The Extracellular portion of the chain corresponds to 265-273 (IQRRRYRDG). A helical membrane pass occupies residues 274 to 291 (IDNLLVLLIGGIPIAMPS). The Cytoplasmic portion of the chain corresponds to 292–643 (VLSVTMATGS…TSRAIFQRMK (352 aa)). Asp-329 (4-aspartylphosphate intermediate) is an active-site residue. Residues Asp-588 and Asp-592 each coordinate Mg(2+). Residues 644-665 (NYTIYAVSITIRIVFGFMFIAL) traverse the membrane as a helical segment. The Extracellular segment spans residues 666–670 (IWQFD). The chain crosses the membrane as a helical span at residues 671-693 (FSPFMVLIIAILNDGTIMTISKD). Residues 694 to 709 (RMKPSPQPDSWKLRDI) are Cytoplasmic-facing. Residues 710-730 (FSTGVVLGGYQALMTVVFFWV) form a helical membrane-spanning segment. Residues 731-751 (MKDSDFFSNYFGVRPLSQRPE) are Extracellular-facing. A helical transmembrane segment spans residues 752 to 772 (QMMAALYLQVSIISQALIFVT). Over 773–784 (RSRSWSYAECPG) the chain is Cytoplasmic. The helical transmembrane segment at 785–805 (LLLLGAFVIAQLVATFIAVYA) threads the bilayer. Residues 806–813 (NWSFARIE) lie on the Extracellular side of the membrane. Residues 814 to 834 (GAGWGWAGVIWLYSFLTYIPL) form a helical membrane-spanning segment. Over 835 to 949 (DLLKFGIRYV…IDTIQQHYTV (115 aa)) the chain is Cytoplasmic. Thr-881 is subject to Phosphothreonine. Phosphoserine is present on residues Ser-899 and Ser-931. The interval 947-949 (YTV) is interaction with 14-3-3 proteins. Thr-948 is subject to Phosphothreonine.

This sequence belongs to the cation transport ATPase (P-type) (TC 3.A.3) family. Type IIIA subfamily. As to quaternary structure, binds to 14-3-3 proteins. The binding is induced by phosphorylation of Thr-948. Binding to 14-3-3 proteins activates the H(+)-ATPase. Expressed in guard cells and leaves.

Its subcellular location is the membrane. The enzyme catalyses ATP + H2O + H(+)(in) = ADP + phosphate + 2 H(+)(out). The plasma membrane H(+) ATPase of plants and fungi generates a proton gradient that drives the active transport of nutrients by H(+)-symport. The resulting external acidification and/or internal alkinization may mediate growth responses. The chain is ATPase 5, plasma membrane-type (AHA5) from Arabidopsis thaliana (Mouse-ear cress).